The following is a 506-amino-acid chain: Aldehyde dehydrogenase [NAD(P)+] 1 (506 aa).

The active-site Proton acceptor is the Glu-268. The active-site Nucleophile is Cys-302.

The protein belongs to the aldehyde dehydrogenase family.

Its subcellular location is the cytoplasm. The enzyme catalyses an aldehyde + NAD(+) + H2O = a carboxylate + NADH + 2 H(+). It catalyses the reaction 3-aminopropanal + NAD(+) + H2O = beta-alanine + NADH + 2 H(+). In terms of biological role, cytoplasmic aldehyde dehydrogenase involved in ethanol oxidation. Required for pantothenic acid production through the conversion of 3-aminopropanal to beta-alanine, an intermediate in pantothenic acid (vitamin B5) and coenzyme A (CoA) biosynthesis. This is Aldehyde dehydrogenase [NAD(P)+] 1 (ALD2) from Saccharomyces cerevisiae (strain ATCC 204508 / S288c) (Baker's yeast).